The following is a 134-amino-acid chain: Holo-[acyl-carrier-protein] synthase (134 aa).

Residues D8 and E59 each coordinate Mg(2+).

It belongs to the P-Pant transferase superfamily. AcpS family. The cofactor is Mg(2+).

It localises to the cytoplasm. The enzyme catalyses apo-[ACP] + CoA = holo-[ACP] + adenosine 3',5'-bisphosphate + H(+). Transfers the 4'-phosphopantetheine moiety from coenzyme A to a Ser of acyl-carrier-protein. This is Holo-[acyl-carrier-protein] synthase from Zymomonas mobilis subsp. mobilis (strain ATCC 31821 / ZM4 / CP4).